Here is a 450-residue protein sequence, read N- to C-terminus: MNGETNVEQIQIIDSNKHVGETVKIGAWIANKRSSGKIAFLQLRDGTAFFQGVVFKPNFIEAFGEEAGTEKFQEIKHLSQETAVMVTGVIKEDSRSKFGYEMDITDLEVVGASEDYPITPKEHGTDFLMDHRHLWLRSSKQHAIMLVRNEIIRATYEFFNEQGFIKIDSPILTGSAPEGTTELFETDYFGQPAFLSQTGQLYAEAGAMAFGKVFTFGPTFRAEKSKTRRHLTEFWMIEPEMAYTTHEESLDIQEAYVKHLIKSVLKNQQYPLDVLERDTALLEKYVSEPFKRITYDDAIELLQKEEANNDYDHIEWGEDFGSPHETFISNYYGVPTFILNYPKAIKAFYMKPHPTREDVVICADLIAPEGYGEIIGGSERATDYDYLKEKVAEFGLSEEEYSWYLDLRKYGSVPHSGFGLGLERAVTFITGNEHIREAIPFPRMLNRIYP.

The protein belongs to the class-II aminoacyl-tRNA synthetase family. As to quaternary structure, homodimer.

Its subcellular location is the cytoplasm. The catalysed reaction is tRNA(Asn) + L-asparagine + ATP = L-asparaginyl-tRNA(Asn) + AMP + diphosphate + H(+). This is Asparagine--tRNA ligase from Enterococcus faecalis (strain ATCC 700802 / V583).